Consider the following 113-residue polypeptide: Putative pterin-4-alpha-carbinolamine dehydratase (113 aa).

This sequence belongs to the pterin-4-alpha-carbinolamine dehydratase family.

It catalyses the reaction (4aS,6R)-4a-hydroxy-L-erythro-5,6,7,8-tetrahydrobiopterin = (6R)-L-erythro-6,7-dihydrobiopterin + H2O. The sequence is that of Putative pterin-4-alpha-carbinolamine dehydratase from Saccharophagus degradans (strain 2-40 / ATCC 43961 / DSM 17024).